A 329-amino-acid chain; its full sequence is GTP 3',8-cyclase (329 aa).

One can recognise a Radical SAM core domain in the interval 8 to 234; that stretch reads AFARKFYYLR…QLRQRSDGPA (227 aa). Arg17 provides a ligand contact to GTP. Residues Cys24 and Cys28 each contribute to the [4Fe-4S] cluster site. Tyr30 is an S-adenosyl-L-methionine binding site. Cys31 contributes to the [4Fe-4S] cluster binding site. Residue Arg68 participates in GTP binding. Residue Gly72 participates in S-adenosyl-L-methionine binding. Thr99 contributes to the GTP binding site. Ser123 is an S-adenosyl-L-methionine binding site. Lys160 provides a ligand contact to GTP. Position 194 (Met194) interacts with S-adenosyl-L-methionine. [4Fe-4S] cluster-binding residues include Cys257 and Cys260. Residue 262–264 coordinates GTP; sequence RLR. Residue Cys274 participates in [4Fe-4S] cluster binding.

This sequence belongs to the radical SAM superfamily. MoaA family. As to quaternary structure, monomer and homodimer. The cofactor is [4Fe-4S] cluster.

The catalysed reaction is GTP + AH2 + S-adenosyl-L-methionine = (8S)-3',8-cyclo-7,8-dihydroguanosine 5'-triphosphate + 5'-deoxyadenosine + L-methionine + A + H(+). It functions in the pathway cofactor biosynthesis; molybdopterin biosynthesis. Catalyzes the cyclization of GTP to (8S)-3',8-cyclo-7,8-dihydroguanosine 5'-triphosphate. This Salmonella paratyphi B (strain ATCC BAA-1250 / SPB7) protein is GTP 3',8-cyclase.